The following is a 653-amino-acid chain: Protein SCARECROW (653 aa).

2 disordered regions span residues 1–69 and 193–265; these read MAES…RRVS and PSSS…AVQT. Residues 17–31 are compositionally biased toward low complexity; sequence PLRTTSSGSSSSNNR. Residues 32-41 are compositionally biased toward pro residues; the sequence is GPPPPPPPPL. Residues 51-63 show a composition bias toward polar residues; sequence EMSSNPDYNNSSR. The span at 209–230 shows a compositional bias: low complexity; the sequence is QISNNPSPPQQQQQHQQQQQQH. The segment covering 246-265 has biased composition (polar residues); the sequence is STDAPPQPETVTATVPAVQT. Positions 281-650 constitute a GRAS domain; it reads QKQDEEGLHL…LSLLTASAWT (370 aa). Residues 288 to 351 form a leucine repeat I (LRI) region; sequence LHLLTLLLQC…LLNSCLGIYA (64 aa). The LxCxE motif motif lies at 295 to 299; the sequence is LQCAE. Residues 370–435 are VHIID; it reads FQVFNGISPL…GGPPHVRLTG (66 aa). The VHIID signature appears at 401 to 405; it reads VHIID. The tract at residues 445-477 is leucine repeat II (LRII); sequence ATGKRLSDFADKLGLPFEFCPLAEKVGNLDTER. The tract at residues 486-573 is PFYRE; that stretch reads VAVHWLQHSL…QQLLSKEIRN (88 aa). Residues 576 to 650 form an SAW region; it reads AVGGPSRSGE…LSLLTASAWT (75 aa).

This sequence belongs to the GRAS family. As to quaternary structure, interacts with SHR, JKD and MGP. Interacts with SIEL. Interacts with RBR1 through its the LxCxE motif. In terms of tissue distribution, expressed in siliques, leaves and roots. Detected in the initial daughter cell before its asymmetric division and remains expressed only in the endodermal cell layer after the division. Expressed in the endodermis or starch sheath of the seedling hypocotyl, in the leaf bundle sheath cells and the root quiescent center.

It localises to the nucleus. In terms of biological role, transcription factor required for quiescent center cells specification and maintenance of surrounding stem cells, and for the asymmetric cell division involved in radial pattern formation in roots. Essential for cell division but not differentiation of the ground tissue. Also required for normal shoot gravitropism. Regulates the radial organization of the shoot axial organs. Binds to the promoter of MGP, NUC, RLK and SCL3. Restricts SHR movment and sequesters it into the nucleus of the endodermis. This chain is Protein SCARECROW, found in Arabidopsis thaliana (Mouse-ear cress).